The primary structure comprises 505 residues: 2-isopropylmalate synthase (505 aa).

Residues 5-269 enclose the Pyruvate carboxyltransferase domain; it reads IKIFDTTLRD…ETGIHTEYLY (265 aa). The Mn(2+) site is built by Asp-14, His-204, His-206, and Asn-240. Residues 393–505 are regulatory domain; it reads SLLYFHTFTG…AVNRFELRKR (113 aa).

This sequence belongs to the alpha-IPM synthase/homocitrate synthase family. LeuA type 1 subfamily. Homodimer. Requires Mn(2+) as cofactor.

It is found in the cytoplasm. It carries out the reaction 3-methyl-2-oxobutanoate + acetyl-CoA + H2O = (2S)-2-isopropylmalate + CoA + H(+). It functions in the pathway amino-acid biosynthesis; L-leucine biosynthesis; L-leucine from 3-methyl-2-oxobutanoate: step 1/4. In terms of biological role, catalyzes the condensation of the acetyl group of acetyl-CoA with 3-methyl-2-oxobutanoate (2-ketoisovalerate) to form 3-carboxy-3-hydroxy-4-methylpentanoate (2-isopropylmalate). In Sediminispirochaeta smaragdinae (strain DSM 11293 / JCM 15392 / SEBR 4228) (Spirochaeta smaragdinae), this protein is 2-isopropylmalate synthase.